A 380-amino-acid polypeptide reads, in one-letter code: 4-hydroxy-3-methylbut-2-en-1-yl diphosphate synthase (flavodoxin) (380 aa).

Cys279, Cys282, Cys314, and Glu321 together coordinate [4Fe-4S] cluster.

The protein belongs to the IspG family. Requires [4Fe-4S] cluster as cofactor.

The catalysed reaction is (2E)-4-hydroxy-3-methylbut-2-enyl diphosphate + oxidized [flavodoxin] + H2O + 2 H(+) = 2-C-methyl-D-erythritol 2,4-cyclic diphosphate + reduced [flavodoxin]. It participates in isoprenoid biosynthesis; isopentenyl diphosphate biosynthesis via DXP pathway; isopentenyl diphosphate from 1-deoxy-D-xylulose 5-phosphate: step 5/6. Its function is as follows. Converts 2C-methyl-D-erythritol 2,4-cyclodiphosphate (ME-2,4cPP) into 1-hydroxy-2-methyl-2-(E)-butenyl 4-diphosphate. This Tropheryma whipplei (strain TW08/27) (Whipple's bacillus) protein is 4-hydroxy-3-methylbut-2-en-1-yl diphosphate synthase (flavodoxin).